Consider the following 83-residue polypeptide: Keratin-associated protein 21-2 (83 aa).

In terms of assembly, interacts with hair keratins.

In the hair cortex, hair keratin intermediate filaments are embedded in an interfilamentous matrix, consisting of hair keratin-associated proteins (KRTAP), which are essential for the formation of a rigid and resistant hair shaft through their extensive disulfide bond cross-linking with abundant cysteine residues of hair keratins. The matrix proteins include the high-sulfur and high-glycine-tyrosine keratins. The protein is Keratin-associated protein 21-2 (KRTAP21-2) of Homo sapiens (Human).